A 470-amino-acid chain; its full sequence is 6-phospho-beta-galactosidase (470 aa).

Glutamine 19, histidine 116, asparagine 159, glutamate 160, and asparagine 297 together coordinate D-galactose 6-phosphate. Glutamate 160 acts as the Proton donor in catalysis. The active-site Nucleophile is the glutamate 375. D-galactose 6-phosphate is bound by residues serine 430, tryptophan 431, lysine 437, and tyrosine 439.

Belongs to the glycosyl hydrolase 1 family.

The catalysed reaction is a 6-phospho-beta-D-galactoside + H2O = D-galactose 6-phosphate + an alcohol. It participates in carbohydrate metabolism; lactose degradation; D-galactose 6-phosphate and beta-D-glucose from lactose 6-phosphate: step 1/1. This Staphylococcus aureus (strain Mu3 / ATCC 700698) protein is 6-phospho-beta-galactosidase.